Here is a 123-residue protein sequence, read N- to C-terminus: Small ribosomal subunit protein uS13 (123 aa).

The segment at 99–123 is disordered; it reads RGQRTRTNARTRKGPRRTVGVKRKK.

It belongs to the universal ribosomal protein uS13 family. In terms of assembly, part of the 30S ribosomal subunit. Forms a loose heterodimer with protein S19. Forms two bridges to the 50S subunit in the 70S ribosome.

Located at the top of the head of the 30S subunit, it contacts several helices of the 16S rRNA. In the 70S ribosome it contacts the 23S rRNA (bridge B1a) and protein L5 of the 50S subunit (bridge B1b), connecting the 2 subunits; these bridges are implicated in subunit movement. Contacts the tRNAs in the A and P-sites. This is Small ribosomal subunit protein uS13 from Carboxydothermus hydrogenoformans (strain ATCC BAA-161 / DSM 6008 / Z-2901).